Reading from the N-terminus, the 387-residue chain is Acetylajmalan esterase (387 aa).

The signal sequence occupies residues 1–22 (MGFARLLHLVFSLLVFAGITNG). Catalysis depends on S36, which acts as the Nucleophile. N-linked (GlcNAc...) asparagine glycosylation is found at N98, N180, N199, N249, and N296. Residues D337 and H340 contribute to the active site.

The protein belongs to the 'GDSL' lipolytic enzyme family.

The catalysed reaction is 17-O-acetylajmaline + H2O = ajmaline + acetate + H(+). It catalyses the reaction 17-O-acetylnorajmaline + H2O = norajmaline + acetate + H(+). It functions in the pathway alkaloid biosynthesis; ajmaline biosynthesis. Functionally, acetylesterase involved in the biosynthesis of ajmaline-type monoterpenoid indole alkaloids (MIAs) natural products, important plant-derived pharmaceuticals used in the therapy of heart disorders. Deacetylates 17-O-acetylajmaline and 17-O-acetylnorajmaline to produce ajmaline and norajmaline, but is inactive toward other acetylated alkaloids. This is Acetylajmalan esterase from Rauvolfia serpentina (Serpentine wood).